Reading from the N-terminus, the 349-residue chain is Beta-hexosaminidase (349 aa).

Substrate is bound by residues aspartate 64, arginine 72, arginine 138, and 168-169 (KH). Histidine 181 serves as the catalytic Proton donor/acceptor. The active-site Nucleophile is aspartate 252.

It belongs to the glycosyl hydrolase 3 family. NagZ subfamily.

It localises to the cytoplasm. It carries out the reaction Hydrolysis of terminal non-reducing N-acetyl-D-hexosamine residues in N-acetyl-beta-D-hexosaminides.. It functions in the pathway cell wall biogenesis; peptidoglycan recycling. Plays a role in peptidoglycan recycling by cleaving the terminal beta-1,4-linked N-acetylglucosamine (GlcNAc) from peptide-linked peptidoglycan fragments, giving rise to free GlcNAc, anhydro-N-acetylmuramic acid and anhydro-N-acetylmuramic acid-linked peptides. The sequence is that of Beta-hexosaminidase from Nitrosospira multiformis (strain ATCC 25196 / NCIMB 11849 / C 71).